We begin with the raw amino-acid sequence, 102 residues long: Large ribosomal subunit protein bL21 (102 aa).

It belongs to the bacterial ribosomal protein bL21 family. Part of the 50S ribosomal subunit. Contacts protein L20.

Functionally, this protein binds to 23S rRNA in the presence of protein L20. This chain is Large ribosomal subunit protein bL21, found in Stenotrophomonas maltophilia (strain K279a).